The primary structure comprises 163 residues: MLKRSLLFLTVLLLLFSFSSITNEVSASSSFDKGKYKKGDDASYFEPTGPYLMVNVTGVDGKRNELLSPRYVEFPIKPGTTLTKEKIEYYVEWALDATAYKEFRVVELDPSAKIEVTYYDKNKKKEETKSFPITEKGFVVPDLSEHIKNPGFNLITKVVIEKK.

The signal sequence occupies residues 1-27 (MLKRSLLFLTVLLLLFSFSSITNEVSA).

Belongs to the staphylokinase family.

It localises to the secreted. Potent plasminogen activator that converts plasminogen into plasmin. It forms a 1:1 complex with plasmin, which in turn activates other plasminogen molecules. This is Staphylokinase (sak) from Staphylococcus aureus (Bacteriophage P42D).